The sequence spans 393 residues: S-adenosylmethionine synthase (393 aa).

Position 16 (His-16) interacts with ATP. Residue Asp-18 participates in Mg(2+) binding. Residue Glu-44 coordinates K(+). L-methionine-binding residues include Glu-57 and Gln-100. The segment at 100–110 is flexible loop; that stretch reads QSNDIAQGVDQ. ATP-binding positions include 167-169, 238-239, Asp-247, 253-254, Ala-270, and Lys-274; these read DAK, RF, and RK. L-methionine is bound at residue Asp-247. Lys-278 serves as a coordination point for L-methionine.

The protein belongs to the AdoMet synthase family. In terms of assembly, homotetramer; dimer of dimers. Mg(2+) is required as a cofactor. Requires K(+) as cofactor.

The protein resides in the cytoplasm. It catalyses the reaction L-methionine + ATP + H2O = S-adenosyl-L-methionine + phosphate + diphosphate. Its pathway is amino-acid biosynthesis; S-adenosyl-L-methionine biosynthesis; S-adenosyl-L-methionine from L-methionine: step 1/1. Functionally, catalyzes the formation of S-adenosylmethionine (AdoMet) from methionine and ATP. The overall synthetic reaction is composed of two sequential steps, AdoMet formation and the subsequent tripolyphosphate hydrolysis which occurs prior to release of AdoMet from the enzyme. The sequence is that of S-adenosylmethionine synthase from Methylibium petroleiphilum (strain ATCC BAA-1232 / LMG 22953 / PM1).